A 479-amino-acid chain; its full sequence is Aspartyl/glutamyl-tRNA(Asn/Gln) amidotransferase subunit B (479 aa).

The protein belongs to the GatB/GatE family. GatB subfamily. Heterotrimer of A, B and C subunits.

The enzyme catalyses L-glutamyl-tRNA(Gln) + L-glutamine + ATP + H2O = L-glutaminyl-tRNA(Gln) + L-glutamate + ADP + phosphate + H(+). It catalyses the reaction L-aspartyl-tRNA(Asn) + L-glutamine + ATP + H2O = L-asparaginyl-tRNA(Asn) + L-glutamate + ADP + phosphate + 2 H(+). Its function is as follows. Allows the formation of correctly charged Asn-tRNA(Asn) or Gln-tRNA(Gln) through the transamidation of misacylated Asp-tRNA(Asn) or Glu-tRNA(Gln) in organisms which lack either or both of asparaginyl-tRNA or glutaminyl-tRNA synthetases. The reaction takes place in the presence of glutamine and ATP through an activated phospho-Asp-tRNA(Asn) or phospho-Glu-tRNA(Gln). This is Aspartyl/glutamyl-tRNA(Asn/Gln) amidotransferase subunit B from Streptococcus mutans serotype c (strain ATCC 700610 / UA159).